Reading from the N-terminus, the 66-residue chain is Conotoxin Lt3.5 (66 aa).

Positions 1 to 20 are cleaved as a signal peptide; the sequence is MMSKLGALLTICLLLFPLTA. A propeptide spanning residues 21–53 is cleaved from the precursor; the sequence is VPLDGDQPLDRHAERMHDGISPKRHPWFDPVKR. Intrachain disulfides connect cysteine 54/cysteine 66, cysteine 55/cysteine 62, and cysteine 59/cysteine 65. Proline 64 carries the post-translational modification 4-hydroxyproline.

This sequence belongs to the conotoxin M superfamily. Expressed by the venom duct.

The protein localises to the secreted. The polypeptide is Conotoxin Lt3.5 (Conus litteratus (Lettered cone)).